A 400-amino-acid chain; its full sequence is Laminin subunit B (400 aa).

Laminin EGF-like domains follow at residues 1–5 (EGCKP), 6–53 (CECD…GCKS), and 54–100 (CTCN…QCIP). Intrachain disulfides connect Cys-6–Cys-18, Cys-8–Cys-25, Cys-27–Cys-36, Cys-39–Cys-51, Cys-54–Cys-66, Cys-56–Cys-73, Cys-75–Cys-84, and Cys-87–Cys-98. Residues 101 to 400 (CGECFDNWDK…AEAKNNAHEA (300 aa)) are domain II and I. A coiled-coil region spans residues 140 to 235 (KEFEELEQVL…RENALEIQEQ (96 aa)). Residues Asn-160, Asn-175, Asn-216, Asn-266, Asn-283, Asn-310, and Asn-356 are each glycosylated (N-linked (GlcNAc...) asparagine). Residues 353–400 (EAKNTSRKAEELIKSKYRSTSSTLSELENSNKQCKQATAEAKNNAHEA) are a coiled coil. Residues 369–400 (YRSTSSTLSELENSNKQCKQATAEAKNNAHEA) form a disordered region. The segment covering 371-383 (STSSTLSELENSN) has biased composition (low complexity).

In terms of assembly, laminin is a complex glycoprotein, consisting of three different polypeptide chains (alpha, beta, gamma), which are bound to each other by disulfide bonds into a cross-shaped molecule comprising one long and three short arms with globules at each end. As to expression, individual glial and muscle cells.

It is found in the secreted. It localises to the extracellular space. The protein resides in the extracellular matrix. In terms of biological role, binding to cells via a high affinity receptor, laminin is thought to mediate the attachment, migration and organization of cells into tissues during embryonic development by interacting with other extracellular matrix components. The chain is Laminin subunit B from Hirudo medicinalis (Medicinal leech).